The chain runs to 41 residues: U-theraphotoxin-Lk1a (41 aa).

3 disulfide bridges follow: cysteine 1–cysteine 16, cysteine 8–cysteine 21, and cysteine 15–cysteine 36.

This sequence belongs to the neurotoxin 14 (magi-1) family. 08 (Ltx-4) subfamily. In terms of tissue distribution, expressed by the venom gland.

The protein localises to the secreted. Toxin that causes irreversible contractile paralysis in adult Aedes aegypti resulting in 100% mortality after 24 hours. In Lasiodora klugi (Bahia scarlet tarantula), this protein is U-theraphotoxin-Lk1a.